The sequence spans 505 residues: N-succinylglutamate 5-semialdehyde dehydrogenase (505 aa).

234 to 239 is an NAD(+) binding site; it reads GSAHTG. Active-site residues include E257 and C291.

Belongs to the aldehyde dehydrogenase family. AstD subfamily.

It carries out the reaction N-succinyl-L-glutamate 5-semialdehyde + NAD(+) + H2O = N-succinyl-L-glutamate + NADH + 2 H(+). It participates in amino-acid degradation; L-arginine degradation via AST pathway; L-glutamate and succinate from L-arginine: step 4/5. In terms of biological role, catalyzes the NAD-dependent reduction of succinylglutamate semialdehyde into succinylglutamate. This Yersinia pseudotuberculosis serotype IB (strain PB1/+) protein is N-succinylglutamate 5-semialdehyde dehydrogenase.